The sequence spans 401 residues: Homocitrate synthase (401 aa).

Residues 22–271 (VRFCDTTLRD…KLPIDLDTTS (250 aa)) form the Pyruvate carboxyltransferase domain. The segment at 367-401 (TRHKRGLDSRDLPGTSRAGRDAGPRAGTPTREEPV) is disordered.

The protein belongs to the alpha-IPM synthase/homocitrate synthase family.

It carries out the reaction acetyl-CoA + 2-oxoglutarate + H2O = (2R)-homocitrate + CoA + H(+). Its function is as follows. This protein is a Fe-Mo-cofactor biosynthetic component. The sequence is that of Homocitrate synthase (nifV) from Frankia sp. (strain FaC1).